The sequence spans 333 residues: NADH-quinone oxidoreductase subunit H (333 aa).

8 helical membrane-spanning segments follow: residues V8–W28, I75–I95, I108–G128, M154–V174, P191–A211, I251–G271, F273–I293, and I312–A332.

It belongs to the complex I subunit 1 family. NDH-1 is composed of 14 different subunits. Subunits NuoA, H, J, K, L, M, N constitute the membrane sector of the complex.

It is found in the cell inner membrane. The catalysed reaction is a quinone + NADH + 5 H(+)(in) = a quinol + NAD(+) + 4 H(+)(out). In terms of biological role, NDH-1 shuttles electrons from NADH, via FMN and iron-sulfur (Fe-S) centers, to quinones in the respiratory chain. The immediate electron acceptor for the enzyme in this species is believed to be ubiquinone. Couples the redox reaction to proton translocation (for every two electrons transferred, four hydrogen ions are translocated across the cytoplasmic membrane), and thus conserves the redox energy in a proton gradient. This subunit may bind ubiquinone. This Desulfotalea psychrophila (strain LSv54 / DSM 12343) protein is NADH-quinone oxidoreductase subunit H.